The following is a 232-amino-acid chain: Cytochrome c oxidase subunit 2 (232 aa).

Over 1–30 the chain is Mitochondrial intermembrane; that stretch reads MNNFFQDFNLLFSSSLFSSYMDWFYNFNCS. The helical transmembrane segment at 31 to 52 threads the bilayer; sequence LLFGVLSFVSTMFVYLLLSSFY. The Mitochondrial matrix segment spans residues 53–69; sequence FKSKKIEYQFGELLCSV. Residues 70–89 form a helical membrane-spanning segment; it reads FPTLILVMQMVPSLSLLYYY. Residues 90-232 lie on the Mitochondrial intermembrane side of the membrane; the sequence is GLMNLDSSLT…KSWCVGLLSD (143 aa). Residues His-164, Cys-199, Glu-201, Cys-203, His-207, and Met-210 each coordinate Cu cation. Glu-201 is a binding site for Mg(2+).

Belongs to the cytochrome c oxidase subunit 2 family. Component of the cytochrome c oxidase (complex IV, CIV), a multisubunit enzyme composed of a catalytic core of 3 subunits and several supernumerary subunits. The complex exists as a monomer or a dimer and forms supercomplexes (SCs) in the inner mitochondrial membrane with ubiquinol-cytochrome c oxidoreductase (cytochrome b-c1 complex, complex III, CIII). Requires Cu cation as cofactor.

It localises to the mitochondrion inner membrane. It catalyses the reaction 4 Fe(II)-[cytochrome c] + O2 + 8 H(+)(in) = 4 Fe(III)-[cytochrome c] + 2 H2O + 4 H(+)(out). Its function is as follows. Component of the cytochrome c oxidase, the last enzyme in the mitochondrial electron transport chain which drives oxidative phosphorylation. The respiratory chain contains 3 multisubunit complexes succinate dehydrogenase (complex II, CII), ubiquinol-cytochrome c oxidoreductase (cytochrome b-c1 complex, complex III, CIII) and cytochrome c oxidase (complex IV, CIV), that cooperate to transfer electrons derived from NADH and succinate to molecular oxygen, creating an electrochemical gradient over the inner membrane that drives transmembrane transport and the ATP synthase. Cytochrome c oxidase is the component of the respiratory chain that catalyzes the reduction of oxygen to water. Electrons originating from reduced cytochrome c in the intermembrane space (IMS) are transferred via the dinuclear copper A center (CU(A)) of subunit 2 and heme A of subunit 1 to the active site in subunit 1, a binuclear center (BNC) formed by heme A3 and copper B (CU(B)). The BNC reduces molecular oxygen to 2 water molecules using 4 electrons from cytochrome c in the IMS and 4 protons from the mitochondrial matrix. The protein is Cytochrome c oxidase subunit 2 (COII) of Ascaris suum (Pig roundworm).